We begin with the raw amino-acid sequence, 309 residues long: MKIYLDVIWLLNFCFDALLLLLTAFILKRHVKKRRLVGGAFIGSSIVLLMFTPFSPIVEHPAGKLAFSVVIVVVTFGFKRFRFFFQNLFSFYFATFLMGGGIIGAHSLLQSNSIVQNGVMITNQTGFGDPISWLFIVGGFPALWFFSKRRIEDIETKNIQYEERVSVQADLGSQTLHVRGLIDSGNQLYDPLTKTPVMIIYIDKLEPIFGTAETMIIRNTDPLEAIEQLDDSFRFLDKMRLIPYRGVGQQNQFLLCVKPDHVTIMTKEEMISADKCLIGISTTKLSADGEFDAIIHPKMLSGKAVKHVS.

5 consecutive transmembrane segments (helical) span residues 7-27 (VIWL…AFIL), 36-55 (LVGG…TPFS), 61-78 (PAGK…TFGF), 88-105 (LFSF…IIGA), and 130-147 (PISW…WFFS). Asp183 is an active-site residue.

It belongs to the peptidase U4 family. As to quaternary structure, self-associates. Interacts with SigE. Interacts with SpoIIR.

It localises to the cell membrane. Probable aspartic protease that is responsible for the proteolytic cleavage of the RNA polymerase sigma E factor (SigE/spoIIGB) to yield the active peptide in the mother cell during sporulation. Responds to a signal from the forespore that is triggered by the extracellular signal protein SpoIIR. This is Sporulation sigma-E factor-processing peptidase (spoIIGA) from Bacillus subtilis (strain 168).